The chain runs to 159 residues: Probable cyclic pyranopterin monophosphate synthase (159 aa).

Residues 74–76 (MCH) and 110–111 (ME) each bind substrate. D125 is a catalytic residue.

The protein belongs to the MoaC family. As to quaternary structure, homohexamer; trimer of dimers.

It catalyses the reaction (8S)-3',8-cyclo-7,8-dihydroguanosine 5'-triphosphate = cyclic pyranopterin phosphate + diphosphate. Its pathway is cofactor biosynthesis; molybdopterin biosynthesis. In terms of biological role, catalyzes the conversion of (8S)-3',8-cyclo-7,8-dihydroguanosine 5'-triphosphate to cyclic pyranopterin monophosphate (cPMP). This Methanococcoides burtonii (strain DSM 6242 / NBRC 107633 / OCM 468 / ACE-M) protein is Probable cyclic pyranopterin monophosphate synthase.